A 205-amino-acid polypeptide reads, in one-letter code: Adenylyl-sulfate kinase (205 aa).

Position 31-38 (31-38) interacts with ATP; the sequence is GLSGAGKS. The active-site Phosphoserine intermediate is Ser105.

The protein belongs to the APS kinase family.

It carries out the reaction adenosine 5'-phosphosulfate + ATP = 3'-phosphoadenylyl sulfate + ADP + H(+). It functions in the pathway sulfur metabolism; hydrogen sulfide biosynthesis; sulfite from sulfate: step 2/3. Functionally, catalyzes the synthesis of activated sulfate. In Shewanella sp. (strain MR-4), this protein is Adenylyl-sulfate kinase.